The primary structure comprises 625 residues: Endoglucanase 13 (625 aa).

The signal sequence occupies residues 1-34 (MAATMNKTPATTFLLIPAAASLVLLLAAAASVEA). Residue Asp91 is the Nucleophile of the active site. The active site involves His427. An N-linked (GlcNAc...) asparagine glycan is attached at Asn440. Active-site residues include Asp479 and Glu488. The disordered stretch occupies residues 509–530 (ADNTPEYTPAPNAPSPSNGGSP).

The protein belongs to the glycosyl hydrolase 9 (cellulase E) family.

It localises to the secreted. The enzyme catalyses Endohydrolysis of (1-&gt;4)-beta-D-glucosidic linkages in cellulose, lichenin and cereal beta-D-glucans.. This chain is Endoglucanase 13 (GLU6), found in Oryza sativa subsp. indica (Rice).